The following is a 100-amino-acid chain: Putative antiporter subunit mnhF2 (100 aa).

Transmembrane regions (helical) follow at residues 5–25 (ITHI…IICL), 38–60 (VVTF…VLMG), and 70–92 (LIAI…GHVF).

This sequence belongs to the CPA3 antiporters (TC 2.A.63) subunit F family. In terms of assembly, may form a heterooligomeric complex that consists of seven subunits: mnhA2, mnhB2, mnhC2, mnhD2, mnhE2, mnhF2 and mnhG2.

The protein resides in the cell membrane. This chain is Putative antiporter subunit mnhF2 (mnhF2), found in Staphylococcus aureus (strain USA300).